Here is a 552-residue protein sequence, read N- to C-terminus: Histone deacetylase 15 (552 aa).

The segment at 86-115 adopts a RanBP2-type zinc-finger fold; it reads EFVKWCCVNCTMSNPGDMVHCCICGEHKES. The tract at residues 149 to 462 is histone deacetylase; the sequence is STAVGFDERM…ATAVIKVLLG (314 aa). The Proton donor/acceptor role is filled by histidine 277. Aspartate 313, histidine 315, and aspartate 404 together coordinate Zn(2+).

It belongs to the histone deacetylase family. HD type 2 subfamily. Interacts with PIF3 in the dark. Interacts with HY5. Interacts with MYB96. Forms homotetramers. Zn(2+) serves as cofactor. Expressed in stems, leaves, flowers, siliques and mature seeds.

Its subcellular location is the nucleus. It localises to the cytoplasm. It carries out the reaction N(6)-acetyl-L-lysyl-[histone] + H2O = L-lysyl-[histone] + acetate. Its activity is regulated as follows. Inhibited by trichostatin A (TSA), a well-known histone deacetylase inhibitor. Its function is as follows. Responsible for the deacetylation of lysine residues on the N-terminal part of the core histones (H2A, H2B, H3 and H4). Histone deacetylation gives a tag for epigenetic repression and plays an important role in transcriptional regulation, cell cycle progression and developmental events. Histone deacetylases act via the formation of large multiprotein complexes. Represses chlorophyll biosynthesis and photosynthesis in the dark. Is recruited by PIF3 to the promoters of chlorophyll biosynthetic and photosynthetic genes, and represses their transcription by histone deacetylation. Involved in the repression of hypocotyl cell elongation to promote photomorphogenesis. Is recruited by HY5 to the promoters of a subset of cell wall organization and auxin signaling-related genes, and represses gene expression by decreasing the levels of histone H4 acetylation in a light-dependent manner. Promotes abscisic acid (ABA) signaling. Is recruited by MYB96 to the promoters of a subset of Rho GTPase (ROP) genes, which repress ABA signaling at the early stages of signal transduction. Represses ROP expression by removing acetyl groups of histone H3 and H4 from the cognate regions, particularly in the presence of ABA. Represses the plant response to elevated ambient temperature by directly repressing warm temperature-responsive genes. The sequence is that of Histone deacetylase 15 from Arabidopsis thaliana (Mouse-ear cress).